Consider the following 181-residue polypeptide: MARLKDKYLNEVQPNLMQKFGYKNIMQVPKLEKVIINIGLGEAVQNSKAVDAAVGDLMAITGQRPITTKAKKSIAAFKLRAGMTIGTKVTLRGERMYEFVDRLFNVALPRVRDFRGISDKSFDGRGNYTMGLKEQLIFPEIEYDKIDKVRGMDITFVTTAKTDEEARELLKLMGIPFVKVS.

It belongs to the universal ribosomal protein uL5 family. As to quaternary structure, part of the 50S ribosomal subunit; part of the 5S rRNA/L5/L18/L25 subcomplex. Contacts the 5S rRNA and the P site tRNA. Forms a bridge to the 30S subunit in the 70S ribosome.

Its function is as follows. This is one of the proteins that bind and probably mediate the attachment of the 5S RNA into the large ribosomal subunit, where it forms part of the central protuberance. In the 70S ribosome it contacts protein S13 of the 30S subunit (bridge B1b), connecting the 2 subunits; this bridge is implicated in subunit movement. Contacts the P site tRNA; the 5S rRNA and some of its associated proteins might help stabilize positioning of ribosome-bound tRNAs. The sequence is that of Large ribosomal subunit protein uL5 from Desulforamulus reducens (strain ATCC BAA-1160 / DSM 100696 / MI-1) (Desulfotomaculum reducens).